We begin with the raw amino-acid sequence, 318 residues long: MAEAIRSDWSVDEVEALLRLPLLDLVGRANGVHRAHHAPDDIQKASLLSIKTGGCPEDCAYCPQSAHHREVELTREKLMNPDHVVSLARRAQRAGAERFCMGAAWRQVRDGAEFDNVLAMVRGVRALGMEACVTLGMLRPHQAQRLAEAGLTAYNHNLDTSPEFYGQIIGTRTYQDRLDTLAYCRDAGIELCCGGIIGMGESLRDRAAMLQVLANFAPHPESVPINALIPIEGTPLAHRERVGIFDLVRMVATARIIMPLTRVRLSAGRSDFSAAEQALCFLAGANSVFYGDVLLTAPNAGTGADAELFAALGALETA.

Positions 40 to 260 (DDIQKASLLS…VATARIIMPL (221 aa)) constitute a Radical SAM core domain. Positions 55, 59, and 62 each coordinate [4Fe-4S] cluster. Residues cysteine 100, cysteine 132, cysteine 192, and arginine 264 each coordinate [2Fe-2S] cluster.

The protein belongs to the radical SAM superfamily. Biotin synthase family. In terms of assembly, homodimer. Requires [4Fe-4S] cluster as cofactor. The cofactor is [2Fe-2S] cluster.

The catalysed reaction is (4R,5S)-dethiobiotin + (sulfur carrier)-SH + 2 reduced [2Fe-2S]-[ferredoxin] + 2 S-adenosyl-L-methionine = (sulfur carrier)-H + biotin + 2 5'-deoxyadenosine + 2 L-methionine + 2 oxidized [2Fe-2S]-[ferredoxin]. The protein operates within cofactor biosynthesis; biotin biosynthesis; biotin from 7,8-diaminononanoate: step 2/2. Catalyzes the conversion of dethiobiotin (DTB) to biotin by the insertion of a sulfur atom into dethiobiotin via a radical-based mechanism. This chain is Biotin synthase, found in Ruegeria pomeroyi (strain ATCC 700808 / DSM 15171 / DSS-3) (Silicibacter pomeroyi).